The following is a 968-amino-acid chain: MPFTLGQRWISDTESELGLGTVVAVDARTVTLLFPSTGENRLYARSDSPVTRVMFNPGDTITSHDGWQMQVEEVKEENGLLTYIGTRLDTEESGVALREVFLDSKLVFSKPQDRLFAGQIDRMDRFALRYRARKYSSEQFRMPYSGLRGQRTSLIPHQLNIAHDVGRRHAPRVLLADEVGLGKTIEAGMILHQQLLSGAAERVLIIVPETLQHQWLVEMLRRFNLRFALFDDERYAEAQHDAYNPFDTEQLVICSLDFARRSKQRLEHLCEAEWDLLVVDEAHHLVWSEDAPSREYQAIEQLAEHVPGVLLLTATPEQLGMESHFARLRLLDPNRFHDFAQFVEEQKNYRPVADAVAMLLAGNKLSNDELNMLGEMIGEQDIEPLLQAANSDSEDAQSARQELVSMLMDRHGTSRVLFRNTRNGVKGFPKRELHTIKLPLPTQYQTAIKVSGIMGARKSAEDRARDMLYPERIYQEFEGDNATWWNFDPRVEWLMGYLTSHRSQKVLVICAKAATALQLEQVLREREGIRAAVFHEGMSIIERDRAAAWFAEEDTGAQVLLCSEIGSEGRNFQFASHMVMFDLPFNPDLLEQRIGRLDRIGQAHDIQIHVPYLEKTAQSVLVRWYHEGLDAFEHTCPTGRTIYDSVYNDLINYLASPVQTEGFDDLIKNCREQHEALKAQLEQGRDRLLEIHSNGGEKAQALAESIEEQDDDTNLIAFAMNLFDIIGINQDDRGDNMIVLTPSDHMLVPDFPGLSEDGITITFDREVALAREDAQFITWEHPLIRNGLDLILSGDTGSSTISLLKNKALPVGTLLVELIYVVEAQAPKQLQLNRFLPPTPVRMLLDKNGNNLAAQVEFETFNRQLNAVNRHTGSKLVNAVQQDVHAILQLGEAQIEKSARALIDAARNEADEKLSAELSRMEALRAVNPNIRDDELTAIESNRQQVMESLDQAGWRLDALRLIVVTHQ.

The region spanning 164–334 (DVGRRHAPRV…FARLRLLDPN (171 aa)) is the Helicase ATP-binding domain. An ATP-binding site is contributed by 177–184 (DEVGLGKT). Positions 280–283 (DEAH) match the DEAH box motif. The Helicase C-terminal domain maps to 490 to 662 (RVEWLMGYLT…YLASPVQTEG (173 aa)).

It belongs to the SNF2/RAD54 helicase family. RapA subfamily. As to quaternary structure, interacts with the RNAP. Has a higher affinity for the core RNAP than for the holoenzyme. Its ATPase activity is stimulated by binding to RNAP.

Functionally, transcription regulator that activates transcription by stimulating RNA polymerase (RNAP) recycling in case of stress conditions such as supercoiled DNA or high salt concentrations. Probably acts by releasing the RNAP, when it is trapped or immobilized on tightly supercoiled DNA. Does not activate transcription on linear DNA. Probably not involved in DNA repair. The chain is RNA polymerase-associated protein RapA from Shigella sonnei (strain Ss046).